A 481-amino-acid chain; its full sequence is MSEPVVDNVTNKVEKMEVKEKTSAPPKEKKEKKSNKVQLKTPKGTQDYNPRQMTIREQVFDGIKQVFKRHGAVTIETPVFELKETLTGKYGEDSKLIYDLQDQGGEICSLRYDLTVPFARYVAMNGVLNIKRYHIARVYRRDNPIMTKGRFREFYQCDFDIAGTYDLMVPDAECLVMICEILEQVKVGDFQIKLNHRKLLDAIFAICGVPADKFRAICSAVDKLDKSPWEEVRKEMVEVKALDGAVADKIEKFVSLKDEPIKLLQHLRATGMCDGNKDATEALSQLETLFGYLECFGVTQHILFDLSLARGLDYYTGIIYEAVLTGQDRVGSIAAGGRYDGLVGMYGKKDVPAVGFSIGIERIFTILEDEYKKENKKIRENATQVFVVQMEKDLIKERLAIVSELWKAGINAEFSYKVNPKLPAQLNTADESNIPLIIIIGKSEVETNSLSVKTMHDRKQVSIERSNFTVKIKEILSTIPK.

The tract at residues 1–48 (MSEPVVDNVTNKVEKMEVKEKTSAPPKEKKEKKSNKVQLKTPKGTQDY) is disordered. The segment covering 12–31 (KVEKMEVKEKTSAPPKEKKE) has biased composition (basic and acidic residues).

This sequence belongs to the class-II aminoacyl-tRNA synthetase family.

The protein localises to the cytoplasm. It catalyses the reaction tRNA(His) + L-histidine + ATP = L-histidyl-tRNA(His) + AMP + diphosphate + H(+). In Dictyostelium discoideum (Social amoeba), this protein is Histidine--tRNA ligase, cytoplasmic (hisS).